The following is a 265-amino-acid chain: 4-hydroxy-tetrahydrodipicolinate reductase (265 aa).

NAD(+) contacts are provided by residues 7–12 (GASGRM) and D33. R34 is a binding site for NADP(+). NAD(+) contacts are provided by residues 96 to 98 (GTT) and 120 to 123 (AANM). The active-site Proton donor/acceptor is the H153. H154 provides a ligand contact to (S)-2,3,4,5-tetrahydrodipicolinate. The active-site Proton donor is K157. Residue 163 to 164 (GT) participates in (S)-2,3,4,5-tetrahydrodipicolinate binding.

This sequence belongs to the DapB family.

The protein localises to the cytoplasm. It carries out the reaction (S)-2,3,4,5-tetrahydrodipicolinate + NAD(+) + H2O = (2S,4S)-4-hydroxy-2,3,4,5-tetrahydrodipicolinate + NADH + H(+). The catalysed reaction is (S)-2,3,4,5-tetrahydrodipicolinate + NADP(+) + H2O = (2S,4S)-4-hydroxy-2,3,4,5-tetrahydrodipicolinate + NADPH + H(+). It participates in amino-acid biosynthesis; L-lysine biosynthesis via DAP pathway; (S)-tetrahydrodipicolinate from L-aspartate: step 4/4. In terms of biological role, catalyzes the conversion of 4-hydroxy-tetrahydrodipicolinate (HTPA) to tetrahydrodipicolinate. This chain is 4-hydroxy-tetrahydrodipicolinate reductase, found in Burkholderia orbicola (strain MC0-3).